We begin with the raw amino-acid sequence, 384 residues long: Class V chitinase CHIT5a (384 aa).

The first 27 residues, Met1–Ser27, serve as a signal peptide directing secretion. Residues Asn29, Asn114, and Asn133 are each glycosylated (N-linked (GlcNAc...) asparagine). Positions Gly39–His384 constitute a GH18 domain. Glu152 serves as the catalytic Proton donor. Asn195 and Asn234 each carry an N-linked (GlcNAc...) asparagine glycan.

It belongs to the glycosyl hydrolase 18 family. Chitinase class V subfamily.

It catalyses the reaction Random endo-hydrolysis of N-acetyl-beta-D-glucosaminide (1-&gt;4)-beta-linkages in chitin and chitodextrins.. It functions in the pathway glycan degradation; chitin degradation. In terms of biological role, possesses chitinase activity in vitro toward glycol chitin, carboxymethyl-chitin, colloidal chitin, and the chitin oligosaccharides (N-acetylglucosamine) (GlcNAc)6 and (GlcNAc)5. Hydrolyzes (GlcNAc)6 into (GlcNAc)4 and (GlcNAc)2, or two (GlcNAc)3 molecules. Has the capacity to inhibit hyphal growth of the fungus Trichoderma viride in an agar-plate bioassay. This is Class V chitinase CHIT5a from Medicago truncatula (Barrel medic).